Reading from the N-terminus, the 306-residue chain is Protein-L-isoaspartate O-methyltransferase 2 (306 aa).

The disordered stretch occupies residues 1–82 (MSTTPPRNKF…ASAATAGGGG (82 aa)). Positions 38-48 (PAAPTPAPAKP) are enriched in pro residues. Residues 54-77 (PRTAAPAPAPVPASAVEQRASAAT) are compositionally biased toward low complexity. Ser142 is an active-site residue.

The protein belongs to the methyltransferase superfamily. L-isoaspartyl/D-aspartyl protein methyltransferase family.

Its subcellular location is the cytoplasm. It catalyses the reaction [protein]-L-isoaspartate + S-adenosyl-L-methionine = [protein]-L-isoaspartate alpha-methyl ester + S-adenosyl-L-homocysteine. Its function is as follows. Catalyzes the methyl esterification of L-isoaspartyl residues in peptides and proteins that result from spontaneous decomposition of normal L-aspartyl and L-asparaginyl residues. It plays a role in the repair and/or degradation of damaged proteins. In Cupriavidus necator (strain ATCC 17699 / DSM 428 / KCTC 22496 / NCIMB 10442 / H16 / Stanier 337) (Ralstonia eutropha), this protein is Protein-L-isoaspartate O-methyltransferase 2.